Here is a 438-residue protein sequence, read N- to C-terminus: Serine hydroxymethyltransferase (438 aa).

(6S)-5,6,7,8-tetrahydrofolate contacts are provided by residues leucine 133 and 137-139 (GHL). Lysine 242 carries the post-translational modification N6-(pyridoxal phosphate)lysine.

This sequence belongs to the SHMT family. Homodimer. Requires pyridoxal 5'-phosphate as cofactor.

It is found in the cytoplasm. It catalyses the reaction (6R)-5,10-methylene-5,6,7,8-tetrahydrofolate + glycine + H2O = (6S)-5,6,7,8-tetrahydrofolate + L-serine. The protein operates within one-carbon metabolism; tetrahydrofolate interconversion. It participates in amino-acid biosynthesis; glycine biosynthesis; glycine from L-serine: step 1/1. In terms of biological role, catalyzes the reversible interconversion of serine and glycine with tetrahydrofolate (THF) serving as the one-carbon carrier. This reaction serves as the major source of one-carbon groups required for the biosynthesis of purines, thymidylate, methionine, and other important biomolecules. Also exhibits THF-independent aldolase activity toward beta-hydroxyamino acids, producing glycine and aldehydes, via a retro-aldol mechanism. The protein is Serine hydroxymethyltransferase of Brucella ovis (strain ATCC 25840 / 63/290 / NCTC 10512).